The chain runs to 741 residues: NAD(P)H-quinone oxidoreductase subunit 5, chloroplastic (741 aa).

Transmembrane regions (helical) follow at residues tryptophan 9–phenylalanine 29, tryptophan 40–isoleucine 60, isoleucine 89–isoleucine 109, phenylalanine 125–isoleucine 145, valine 147–threonine 167, glycine 185–phenylalanine 205, valine 221–serine 241, threonine 258–alanine 278, leucine 280–isoleucine 300, leucine 327–isoleucine 347, alanine 354–serine 374, threonine 396–serine 416, leucine 425–tyrosine 445, isoleucine 547–proline 567, phenylalanine 602–cysteine 622, and isoleucine 720–tyrosine 740.

It belongs to the complex I subunit 5 family. NDH is composed of at least 16 different subunits, 5 of which are encoded in the nucleus.

It is found in the plastid. Its subcellular location is the chloroplast thylakoid membrane. It catalyses the reaction a plastoquinone + NADH + (n+1) H(+)(in) = a plastoquinol + NAD(+) + n H(+)(out). The enzyme catalyses a plastoquinone + NADPH + (n+1) H(+)(in) = a plastoquinol + NADP(+) + n H(+)(out). Functionally, NDH shuttles electrons from NAD(P)H:plastoquinone, via FMN and iron-sulfur (Fe-S) centers, to quinones in the photosynthetic chain and possibly in a chloroplast respiratory chain. The immediate electron acceptor for the enzyme in this species is believed to be plastoquinone. Couples the redox reaction to proton translocation, and thus conserves the redox energy in a proton gradient. This chain is NAD(P)H-quinone oxidoreductase subunit 5, chloroplastic (ndhF), found in Arabis hirsuta (Hairy rock-cress).